The following is a 129-amino-acid chain: Lysozyme C-3 (129 aa).

The region spanning 1 to 129 is the C-type lysozyme domain; that stretch reads KVYERCELAA…VSRWIRGCRL (129 aa). 4 disulfide bridges follow: cysteine 6-cysteine 127, cysteine 30-cysteine 115, cysteine 64-cysteine 80, and cysteine 76-cysteine 94. Catalysis depends on residues glutamate 35 and aspartate 52.

The protein belongs to the glycosyl hydrolase 22 family.

The protein resides in the secreted. It carries out the reaction Hydrolysis of (1-&gt;4)-beta-linkages between N-acetylmuramic acid and N-acetyl-D-glucosamine residues in a peptidoglycan and between N-acetyl-D-glucosamine residues in chitodextrins.. Its function is as follows. Lysozymes have primarily a bacteriolytic function; those in tissues and body fluids are associated with the monocyte-macrophage system and enhance the activity of immunoagents. The chain is Lysozyme C-3 from Anas platyrhynchos (Mallard).